We begin with the raw amino-acid sequence, 302 residues long: N-acetylmuramic acid 6-phosphate etherase (302 aa).

Residues 58–221 enclose the SIS domain; sequence IGESFLNGGR…STGAMVKTGK (164 aa). The Proton donor role is filled by Glu86. Glu117 is a catalytic residue.

This sequence belongs to the GCKR-like family. MurNAc-6-P etherase subfamily. In terms of assembly, homodimer.

The enzyme catalyses N-acetyl-D-muramate 6-phosphate + H2O = N-acetyl-D-glucosamine 6-phosphate + (R)-lactate. It functions in the pathway amino-sugar metabolism; N-acetylmuramate degradation. Specifically catalyzes the cleavage of the D-lactyl ether substituent of MurNAc 6-phosphate, producing GlcNAc 6-phosphate and D-lactate. The chain is N-acetylmuramic acid 6-phosphate etherase from Clostridium botulinum (strain Okra / Type B1).